Here is a 421-residue protein sequence, read N- to C-terminus: Nuclear speckle RNA-binding protein B (421 aa).

3 disordered regions span residues 1–64 (MDNR…VNIY), 86–114 (TGQT…MVDT), and 197–226 (TDPQ…GIPH). The span at 33 to 44 (PLAPPHPQPQPP) shows a compositional bias: pro residues. The segment covering 89-103 (TSTSTTSSSSSSSTS) has biased composition (low complexity). Positions 323–409 (NTLYVEGLPS…KILRLQFFRN (87 aa)) constitute an RRM domain.

In terms of tissue distribution, isoform 1: Expressed in root meristems, lateral root primordia, root vascular tissues and cotyledon vascular tissues. Isoform 2: Expressed in root meristems, lateral root primordia and root vascular tissues.

It localises to the nucleus speckle. Its function is as follows. Alternative splicing (AS) regulator that binds to specific mRNAs and modulates auxin effects on the transcriptome. Displaced from its targets upon binding to AS competitor long non-coding RNA (ASCO-RNA). This Arabidopsis thaliana (Mouse-ear cress) protein is Nuclear speckle RNA-binding protein B.